We begin with the raw amino-acid sequence, 320 residues long: MAVVTIRQLLDCGVHFGHPKTRWNPKMKRFIFTERSGIYIIDLQQSLALIDKAYDFVKETVAHGGTILFVGTKKQAQESIAEQAQRVGQPYVNQRWLGGLLTNFQTVHKRLNRLKELDLVDFDDTTRGFTKKELLIQRRERDKLEKSLGGIRNLTKTPSAMWVVDTKKEHLAIDEARKLGIPVIGILDTNCDPDEVQYPIPGNDDAIRSVALLTRIIADAAAEGLIQRHQKPDAEGSAPAEPLADWERELLEQGDAAKAALPVEENDVDAEVSAKNEAKSDDEVPAPVHAPESDDATEAKIEAEATEAEAAPATTGPVSE.

Residues 254–320 are disordered; the sequence is GDAAKAALPV…APATTGPVSE (67 aa). Residues 272–282 are compositionally biased toward basic and acidic residues; sequence VSAKNEAKSDD. A compositionally biased stretch (low complexity) spans 308-320; sequence AEAAPATTGPVSE.

This sequence belongs to the universal ribosomal protein uS2 family.

In Clavibacter sepedonicus (Clavibacter michiganensis subsp. sepedonicus), this protein is Small ribosomal subunit protein uS2.